The sequence spans 176 residues: ATP synthase subunit b (176 aa).

A helical membrane pass occupies residues 7 to 27 (IQIPDGSAIFVLLTFILLMFI). Residues 75-94 (SQSQATALMENARKSSEEQS) form a disordered region. Residues 85 to 94 (NARKSSEEQS) show a composition bias toward basic and acidic residues.

Belongs to the ATPase B chain family. F-type ATPases have 2 components, F(1) - the catalytic core - and F(0) - the membrane proton channel. F(1) has five subunits: alpha(3), beta(3), gamma(1), delta(1), epsilon(1). F(0) has three main subunits: a(1), b(2) and c(10-14). The alpha and beta chains form an alternating ring which encloses part of the gamma chain. F(1) is attached to F(0) by a central stalk formed by the gamma and epsilon chains, while a peripheral stalk is formed by the delta and b chains.

It is found in the cell membrane. Its function is as follows. F(1)F(0) ATP synthase produces ATP from ADP in the presence of a proton or sodium gradient. F-type ATPases consist of two structural domains, F(1) containing the extramembraneous catalytic core and F(0) containing the membrane proton channel, linked together by a central stalk and a peripheral stalk. During catalysis, ATP synthesis in the catalytic domain of F(1) is coupled via a rotary mechanism of the central stalk subunits to proton translocation. Functionally, component of the F(0) channel, it forms part of the peripheral stalk, linking F(1) to F(0). The protein is ATP synthase subunit b of Oenococcus oeni (strain ATCC BAA-331 / PSU-1).